The chain runs to 71 residues: Cell division protein FtsB (71 aa).

Residues 1–3 are Cytoplasmic-facing; that stretch reads MKI. Residues 4-21 form a helical membrane-spanning segment; the sequence is LKIFLLSLLFWLQYSLWF. At 22-71 the chain is on the extracellular side; sequence GKNGVLDFIKIYRRVTIEKKNNEYLDMRNNQIILEIENFNNHINKDKKKT.

This sequence belongs to the FtsB family.

It localises to the cell membrane. Essential cell division protein. May link together the upstream cell division proteins, which are predominantly cytoplasmic, with the downstream cell division proteins, which are predominantly extracellular. In Buchnera aphidicola subsp. Acyrthosiphon pisum (strain APS) (Acyrthosiphon pisum symbiotic bacterium), this protein is Cell division protein FtsB.